The following is a 315-amino-acid chain: Acetaldehyde dehydrogenase 1 (315 aa).

12–15 lines the NAD(+) pocket; it reads SGNI. Residue C132 is the Acyl-thioester intermediate of the active site. Residues 163 to 171 and N291 each bind NAD(+); that span reads SAGPGTRAN.

The protein belongs to the acetaldehyde dehydrogenase family.

The catalysed reaction is acetaldehyde + NAD(+) + CoA = acetyl-CoA + NADH + H(+). This chain is Acetaldehyde dehydrogenase 1, found in Paraburkholderia phymatum (strain DSM 17167 / CIP 108236 / LMG 21445 / STM815) (Burkholderia phymatum).